A 478-amino-acid polypeptide reads, in one-letter code: NAD-dependent malic enzyme (478 aa).

The region spanning 12-86 is the ACT domain; sequence TIRLQFEKDI…GVKIVNVSDR (75 aa). The active-site Proton donor is Tyr-114. Lys-169 functions as the Proton acceptor in the catalytic mechanism. A divalent metal cation is bound by residues Glu-211, Asp-212, and Asp-237. Residues 270 to 273, Asn-363, and Asn-393 contribute to the NAD(+) site; that span reads IGAA.

This sequence belongs to the malic enzymes family. In terms of assembly, homotetramer. The cofactor is Mg(2+). Requires Mn(2+) as cofactor.

It catalyses the reaction (S)-malate + NAD(+) = pyruvate + CO2 + NADH. The enzyme catalyses oxaloacetate + H(+) = pyruvate + CO2. The activity is enhanced 5-7 times by ammonium and potassium. Its function is as follows. In addition to the NAD-dependent oxidative decarboxylation of L-malate, the enzyme catalyzes the decarboxylation of oxaloacetate. This chain is NAD-dependent malic enzyme, found in Geobacillus stearothermophilus (Bacillus stearothermophilus).